The primary structure comprises 513 residues: ATP synthase subunit alpha (513 aa).

169-176 (GDRQTGKT) is an ATP binding site.

It belongs to the ATPase alpha/beta chains family. In terms of assembly, F-type ATPases have 2 components, CF(1) - the catalytic core - and CF(0) - the membrane proton channel. CF(1) has five subunits: alpha(3), beta(3), gamma(1), delta(1), epsilon(1). CF(0) has three main subunits: a(1), b(2) and c(9-12). The alpha and beta chains form an alternating ring which encloses part of the gamma chain. CF(1) is attached to CF(0) by a central stalk formed by the gamma and epsilon chains, while a peripheral stalk is formed by the delta and b chains.

Its subcellular location is the cell inner membrane. It carries out the reaction ATP + H2O + 4 H(+)(in) = ADP + phosphate + 5 H(+)(out). In terms of biological role, produces ATP from ADP in the presence of a proton gradient across the membrane. The alpha chain is a regulatory subunit. This Cupriavidus metallidurans (strain ATCC 43123 / DSM 2839 / NBRC 102507 / CH34) (Ralstonia metallidurans) protein is ATP synthase subunit alpha.